Consider the following 35-residue polypeptide: Potassium channel toxin (35 aa).

3 cysteine pairs are disulfide-bonded: cysteine 6–cysteine 25, cysteine 11–cysteine 30, and cysteine 15–cysteine 32.

It belongs to the short scorpion toxin superfamily. Potassium channel inhibitor family. Alpha-KTx 21 subfamily. In terms of tissue distribution, expressed by the venom gland.

It localises to the secreted. Functionally, toxin that blocks voltage-gated potassium channels (Kv). In Tityus metuendus (Scorpion), this protein is Potassium channel toxin.